We begin with the raw amino-acid sequence, 253 residues long: Major prion protein (253 aa).

The signal sequence occupies residues 1-22 (MANLGCWMLVLFVATWSDLGLC). The tract at residues 23–230 (KKRPKPGGWN…ESQAYYQRGS (208 aa)) is interaction with GRB2, ERI3 and SYN1. The segment at 26 to 108 (PKPGGWNTGG…WHKPSKPKTS (83 aa)) is disordered. 5 repeat units span residues 51–59 (PQGGGGWGQ), 60–67 (PHGGGWGQ), 68–75 (PHGGGWGQ), 76–83 (PHGGGWGQ), and 84–91 (PHGGGWGQ). The interval 51-91 (PQGGGGWGQPHGGGWGQPHGGGWGQPHGGGWGQPHGGGWGQ) is 5 X 8 AA tandem repeats of P-H-G-G-G-W-G-Q. Residues 52–95 (QGGGGWGQPHGGGWGQPHGGGWGQPHGGGWGQPHGGGWGQGGGT) are compositionally biased toward gly residues. The Cu(2+) site is built by His-61, Gly-62, Gly-63, His-69, Gly-70, Gly-71, His-77, Gly-78, Gly-79, His-85, Gly-86, and Gly-87. Basic residues predominate over residues 98–108 (QWHKPSKPKTS). A disulfide bond links Cys-179 and Cys-214. Residues Asn-181 and Asn-197 are each glycosylated (N-linked (GlcNAc...) asparagine). Ser-230 carries GPI-anchor amidated serine lipidation. Residues 231-253 (SMVLFSSPPVILLISFLIFLIVG) constitute a propeptide, removed in mature form.

The protein belongs to the prion family. In terms of assembly, monomer and homodimer. Has a tendency to aggregate into amyloid fibrils containing a cross-beta spine, formed by a steric zipper of superposed beta-strands. Soluble oligomers may represent an intermediate stage on the path to fibril formation. Copper binding may promote oligomerization. Interacts with GRB2, APP, ERI3/PRNPIP and SYN1. Mislocalized cytosolically exposed PrP interacts with MGRN1; this interaction alters MGRN1 subcellular location and causes lysosomal enlargement. Interacts with KIAA1191.

Its subcellular location is the cell membrane. It is found in the golgi apparatus. Functionally, its primary physiological function is unclear. Has cytoprotective activity against internal or environmental stresses. May play a role in neuronal development and synaptic plasticity. May be required for neuronal myelin sheath maintenance. May play a role in iron uptake and iron homeostasis. Soluble oligomers are toxic to cultured neuroblastoma cells and induce apoptosis (in vitro). Association with GPC1 (via its heparan sulfate chains) targets PRNP to lipid rafts. Also provides Cu(2+) or Zn(2+) for the ascorbate-mediated GPC1 deaminase degradation of its heparan sulfate side chains. In Macaca fascicularis (Crab-eating macaque), this protein is Major prion protein (PRNP).